The primary structure comprises 89 residues: Large ribosomal subunit protein uL23cz/uL23cy (89 aa).

This sequence belongs to the universal ribosomal protein uL23 family. In terms of assembly, part of the 50S ribosomal subunit.

It localises to the plastid. The protein localises to the chloroplast. Its function is as follows. Binds to 23S rRNA. This chain is Large ribosomal subunit protein uL23cz/uL23cy (rpl23-A), found in Pelargonium hortorum (Common geranium).